Here is a 103-residue protein sequence, read N- to C-terminus: Large ribosomal subunit protein bL21 (103 aa).

The protein belongs to the bacterial ribosomal protein bL21 family. Part of the 50S ribosomal subunit. Contacts protein L20.

Its function is as follows. This protein binds to 23S rRNA in the presence of protein L20. This Shewanella putrefaciens (strain CN-32 / ATCC BAA-453) protein is Large ribosomal subunit protein bL21.